A 418-amino-acid chain; its full sequence is Tyrosine--tRNA ligase 1 (418 aa).

L-tyrosine is bound at residue Tyr-34. The 'HIGH' region motif lies at 39 to 48; the sequence is PTADSLHIGH. L-tyrosine-binding residues include Tyr-169 and Gln-173. The 'KMSKS' region motif lies at 230 to 234; it reads KFGKT. Lys-233 is a binding site for ATP. In terms of domain architecture, S4 RNA-binding spans 352–418; that stretch reads TVLIDLLVES…GKKKYFLIRY (67 aa).

The protein belongs to the class-I aminoacyl-tRNA synthetase family. TyrS type 1 subfamily. As to quaternary structure, homodimer.

It localises to the cytoplasm. It carries out the reaction tRNA(Tyr) + L-tyrosine + ATP = L-tyrosyl-tRNA(Tyr) + AMP + diphosphate + H(+). Its function is as follows. Catalyzes the attachment of tyrosine to tRNA(Tyr) in a two-step reaction: tyrosine is first activated by ATP to form Tyr-AMP and then transferred to the acceptor end of tRNA(Tyr). This chain is Tyrosine--tRNA ligase 1, found in Bacillus cereus (strain ATCC 14579 / DSM 31 / CCUG 7414 / JCM 2152 / NBRC 15305 / NCIMB 9373 / NCTC 2599 / NRRL B-3711).